Consider the following 266-residue polypeptide: Tryptophan synthase alpha chain (266 aa).

Residues Glu49 and Asp60 each act as proton acceptor in the active site.

Belongs to the TrpA family. In terms of assembly, tetramer of two alpha and two beta chains.

The catalysed reaction is (1S,2R)-1-C-(indol-3-yl)glycerol 3-phosphate + L-serine = D-glyceraldehyde 3-phosphate + L-tryptophan + H2O. It functions in the pathway amino-acid biosynthesis; L-tryptophan biosynthesis; L-tryptophan from chorismate: step 5/5. Functionally, the alpha subunit is responsible for the aldol cleavage of indoleglycerol phosphate to indole and glyceraldehyde 3-phosphate. The chain is Tryptophan synthase alpha chain from Trichormus variabilis (strain ATCC 29413 / PCC 7937) (Anabaena variabilis).